Reading from the N-terminus, the 426-residue chain is Potassium channel subfamily K member 2 (426 aa).

Residues 1–61 (MLASASRERP…SAINVMKWKT (61 aa)) lie on the Cytoplasmic side of the membrane. 2 important for GNG4 binding and L-glutamate release in astrocytes regions span residues 17 to 38 (AAPD…LSFS) and 51 to 61 (DSAINVMKWKT). Residues 62-82 (VSTIFLVVVLYLIIGATVFKA) form a helical membrane-spanning segment. Asparagine 110 and asparagine 134 each carry an N-linked (GlcNAc...) asparagine glycan. An intramembrane region (pore-forming) is located at residues 144 to 170 (LGSSFFFAGTVITTIGFGNISPRTEGG). K(+) is bound by residues threonine 157, isoleucine 158, glycine 159, and phenylalanine 160. The tract at residues 157–162 (TIGFGN) is selectivity filter 1. Residues 172-192 (IFCIIYALLGIPLFGFLLAGV) form a helical membrane-spanning segment. The Cytoplasmic portion of the chain corresponds to 193–222 (GDQLGTIFGKGIAKVEDTFIKWNVSQTKIR). Residues 223 to 243 (IISTIIFILFGCVLFVALPAV) traverse the membrane as a helical segment. The pore-forming intramembrane region spans 253-283 (ALDAIYFVVITLTTIGFGDYVAGGSDIEYLD). K(+) contacts are provided by threonine 266, isoleucine 267, glycine 268, and phenylalanine 269. Residues 266–271 (TIGFGD) form a selectivity filter 2 region. The chain crosses the membrane as a helical span at residues 288–308 (VVWFWILVGLAYFAAVLSMIG). The Cytoplasmic portion of the chain corresponds to 309–426 (DWLRVISKKT…EDIAVIENMK (118 aa)). The tract at residues 313 to 326 (VISKKTKEEVGEFR) is interaction with AKAP5. The essential for chloroform and halothane sensitivity stretch occupies residues 337 to 385 (TAEFKETRRRLSVEIYDKFQRATSVKRKLSAELAGNHNQELTPCRRTLS). Residue serine 348 is modified to Phosphoserine; by PKA.

The protein belongs to the two pore domain potassium channel (TC 1.A.1.8) family. Homodimer; disulfide-linked. Forms heterodimers with other 2-pore domain K(+) channel subunits, such as KCNK1, KCNK4, KCNK10 and KCNK18. Interacts with AKAP5; the channel is recruited to postsynaptic microdomains by AKAP5 where it can integrate neurotransmitter receptor signals. Part of a complex composed of AKAP5 and ADRB2. Upon AKAP5 binding, the channel is no longer sensitive to intracellular acidification, membrane stretch or arachidonic acid stimuli. Interacts with POPDC1; the interaction enhances KCNK2 surface expression and is inhibited by cAMP. Interacts (via N-terminus) with G-protein subunit GNG4 (via C-terminus); this interaction confers ion selectivity to L-glutamate and Cl(-) anions. In terms of processing, phosphorylation at Ser-348 controls the reversible conversion from a leak channel to a voltage-dependent channel. As to expression, expressed in cardiomyocytes (at protein level). Expressed in various brain regions including the lateral olfactory tract, piriform cortex of the forebrain, paraventricular and anteromedial thalamic nuclei, brainstem, caudate putamen, nucleus accumbens, neocortex and interpeduncular nucleus. Detected in astrocytes in hippocampus stratum radiatum. In terms of tissue distribution, expressed in brain and kidney.

It is found in the cell membrane. Its subcellular location is the endoplasmic reticulum membrane. The protein localises to the cell projection. The protein resides in the axon. It localises to the dendrite. It is found in the postsynaptic density membrane. Its subcellular location is the sarcolemma. The enzyme catalyses K(+)(in) = K(+)(out). The catalysed reaction is L-glutamate(out) = L-glutamate(in). It catalyses the reaction chloride(in) = chloride(out). It carries out the reaction Rb(+)(in) = Rb(+)(out). The enzyme catalyses Cs(+)(in) = Cs(+)(out). Its activity is regulated as follows. Activated by various stimuli including intracellular acidic pH, mechanical stretch and polyunsaturated fatty acids such as arachidonic acid. Its function is as follows. K(+) channel that conducts voltage-dependent outward rectifying currents upon membrane depolarization. Voltage sensing is coupled to K(+) electrochemical gradient in an 'ion flux gating' mode where outward but not inward ion flow opens the gate. Converts to voltage-independent 'leak' conductance mode upon stimulation by various stimuli including mechanical membrane stretch, acidic pH, heat and lipids. Reversibly converts between a voltage-insensitive K(+) 'leak' channel and a voltage-dependent outward rectifying K(+) channel in a phosphorylation-dependent manner. Homo- and heterodimerizes to form functional channels with distinct regulatory and gating properties. In trigeminal ganglia sensory neurons, the heterodimer of KCNK2/TREK-1 and KCNK18/TRESK inhibits neuronal firing and neurogenic inflammation by stabilizing the resting membrane potential at K(+) equilibrium potential as well as by regulating the threshold of action potentials and the spike frequency. At trigeminal A-beta afferent nerves, the heterodimer of KCNK2/TREK-1 and KCNK4/TRAAK is mostly coexpressed at nodes of Ranvier where it conducts voltage-independent mechanosensitive and thermosensitive currents, allowing rapid action potential repolarization, high speed and high frequence saltatory conduction on myelinated nerves to ensure prompt sensory responses. In hippocampal astrocytes, the heterodimer of KCNK2/TREK-1 and KCNK1/TWIK-1 allows passive K(+) conductance under basal conditions, but changes ion selectivity and becomes permeable to L-glutamate and Cl(-) ions upon binding to G-protein subunit GNG4 in stimulated astrocytes. Mediates rapid L-glutamate release in response to activation of G-protein-coupled receptors such as F2R and CNR1. In hippocampal pyramidal neurons, the homodimer of KCNK2/TREK-1 contributes to gamma-aminobutyric acid (GABA) B-induced slow inhibitory postsynaptic potential. Associates with AKAP5 and Gs-protein-coupled receptor B2AR at postsynaptic dense bodies and converts to a leak channel no longer sensitive to stimulation by arachidonic acid, acidic pH or mechanical stress, nor inhibited by Gq-coupled receptors but still under the negative control of Gs-coupled receptors. Permeable to other monovalent cations such as Rb(+) and Cs(+). Functionally, does not display channel activity but reduces the channel activity of isoform 1, isoform 2 and isoform 4 and reduces cell surface expression of isoform 2. The polypeptide is Potassium channel subfamily K member 2 (Rattus norvegicus (Rat)).